A 201-amino-acid polypeptide reads, in one-letter code: Small ribosomal subunit protein uS4 (201 aa).

The S4 RNA-binding domain occupies 93-153 (ARLDNVVYRM…EKSKSLEAID (61 aa)).

The protein belongs to the universal ribosomal protein uS4 family. Part of the 30S ribosomal subunit. Contacts protein S5. The interaction surface between S4 and S5 is involved in control of translational fidelity.

One of the primary rRNA binding proteins, it binds directly to 16S rRNA where it nucleates assembly of the body of the 30S subunit. In terms of biological role, with S5 and S12 plays an important role in translational accuracy. This chain is Small ribosomal subunit protein uS4, found in Flavobacterium psychrophilum (strain ATCC 49511 / DSM 21280 / CIP 103535 / JIP02/86).